Here is a 188-residue protein sequence, read N- to C-terminus: Molybdopterin synthase catalytic subunit (188 aa).

Over residues 1–14 (MATQPPQDQTSTTP) the composition is skewed to low complexity. The tract at residues 1–23 (MATQPPQDQTSTTPSLPPHLDPT) is disordered. Substrate is bound by residues 134–135 (HR), K150, and 157–159 (KRE).

The protein belongs to the MoaE family. MOCS2B subfamily. Heterotetramer; composed of 2 small (MOCS2A) and 2 large (MOCS2B) subunits.

Its subcellular location is the cytoplasm. It catalyses the reaction 2 [molybdopterin-synthase sulfur-carrier protein]-C-terminal-Gly-aminoethanethioate + cyclic pyranopterin phosphate + H2O = molybdopterin + 2 [molybdopterin-synthase sulfur-carrier protein]-C-terminal Gly-Gly + 2 H(+). It participates in cofactor biosynthesis; molybdopterin biosynthesis. Its function is as follows. Catalytic subunit of the molybdopterin synthase complex, a complex that catalyzes the conversion of precursor Z into molybdopterin. Acts by mediating the incorporation of 2 sulfur atoms from thiocarboxylated MOCS2A into precursor Z to generate a dithiolene group. This chain is Molybdopterin synthase catalytic subunit, found in Aspergillus fumigatus (strain ATCC MYA-4609 / CBS 101355 / FGSC A1100 / Af293) (Neosartorya fumigata).